The sequence spans 84 residues: ATP synthase subunit c (84 aa).

The next 2 helical transmembrane spans lie at 10-30 and 53-73; these read IAVG…FALL and FIIA…ALLF.

It belongs to the ATPase C chain family. In terms of assembly, F-type ATPases have 2 components, F(1) - the catalytic core - and F(0) - the membrane proton channel. F(1) has five subunits: alpha(3), beta(3), gamma(1), delta(1), epsilon(1). F(0) has three main subunits: a(1), b(2) and c(10-14). The alpha and beta chains form an alternating ring which encloses part of the gamma chain. F(1) is attached to F(0) by a central stalk formed by the gamma and epsilon chains, while a peripheral stalk is formed by the delta and b chains.

The protein resides in the cell inner membrane. Its function is as follows. F(1)F(0) ATP synthase produces ATP from ADP in the presence of a proton or sodium gradient. F-type ATPases consist of two structural domains, F(1) containing the extramembraneous catalytic core and F(0) containing the membrane proton channel, linked together by a central stalk and a peripheral stalk. During catalysis, ATP synthesis in the catalytic domain of F(1) is coupled via a rotary mechanism of the central stalk subunits to proton translocation. In terms of biological role, key component of the F(0) channel; it plays a direct role in translocation across the membrane. A homomeric c-ring of between 10-14 subunits forms the central stalk rotor element with the F(1) delta and epsilon subunits. The polypeptide is ATP synthase subunit c (Vibrio alginolyticus).